A 210-amino-acid polypeptide reads, in one-letter code: Protein MSO1 (210 aa).

Residue methionine 1 is modified to N-acetylmethionine. The residue at position 2 (methionine 2) is an N-acetylserine. Positions 88 to 210 are disordered; sequence KHDMKKQNSR…LKRRNNDYGF (123 aa). Serine 102 bears the Phosphoserine mark. Over residues 117–141 the composition is skewed to polar residues; that stretch reads TPSSNGNTPEYTPASKSFQDIYNNH. Composition is skewed to low complexity over residues 142-161 and 172-183; these read TSSSSATPRRASSRPTRPSA and SKTSNSFNTSST.

In terms of assembly, interacts physically with SEC1.

Functionally, involved in secretion. Component of the secretory vesicle docking complex. In Saccharomyces cerevisiae (strain ATCC 204508 / S288c) (Baker's yeast), this protein is Protein MSO1 (MSO1).